The sequence spans 303 residues: MTDLPFTLDQLRIFQAIVVEGSFQKAAQSLYISQPAVSLQIQNLEQQLNAPLFDRSHRKAKLTEAGQVFFKYASRILALCEETCRALEDLHHLQAGSLIIGASQTIGTYLMPGLIGLFRQKYPHICVQLQVHSTRRIAWSVAKGHIDVAVIGGAIPTELIPLLSIQPFAEDELTLIVPPDHPFARLSKIQKEDLYRLRFVSLDRHSTIRKVIDQILHQNGIDTNRLKMEMELNSIEAIKNAVQWGLGAAFVSVCAIAKELELNLVREVEIEAISIKRQLYQITNPNRYQSKAAFTFCQQMLNV.

The 58-residue stretch at 6–63 (FTLDQLRIFQAIVVEGSFQKAAQSLYISQPAVSLQIQNLEQQLNAPLFDRSHRKAKLT) folds into the HTH lysR-type domain. Residues 23–42 (FQKAAQSLYISQPAVSLQIQ) constitute a DNA-binding region (H-T-H motif).

It belongs to the LysR transcriptional regulatory family.

Its subcellular location is the plastid. The protein localises to the chloroplast. In terms of biological role, trans-acting transcriptional regulator of RuBisCO genes (rbcL and rbcS) expression. The polypeptide is Probable RuBisCO transcriptional regulator (rbcR) (Cyanidioschyzon merolae (strain NIES-3377 / 10D) (Unicellular red alga)).